The sequence spans 1216 residues: ATP-dependent helicase/nuclease subunit A (1216 aa).

Positions 26–488 constitute a UvrD-like helicase ATP-binding domain; sequence QKKTAEQIEA…ILLKENFRSS (463 aa). Position 47-54 (47-54) interacts with ATP; sequence ASAGSGKT. Residues 515-802 form the UvrD-like helicase C-terminal domain; it reads KHQLVFANTK…ELMTIHKSKG (288 aa).

Belongs to the helicase family. AddA subfamily. Heterodimer of AddA and AddB/RexB. Mg(2+) is required as a cofactor.

The catalysed reaction is Couples ATP hydrolysis with the unwinding of duplex DNA by translocating in the 3'-5' direction.. It catalyses the reaction ATP + H2O = ADP + phosphate + H(+). Its function is as follows. The heterodimer acts as both an ATP-dependent DNA helicase and an ATP-dependent, dual-direction single-stranded exonuclease. Recognizes the chi site generating a DNA molecule suitable for the initiation of homologous recombination. The AddA nuclease domain is required for chi fragment generation; this subunit has the helicase and 3' -&gt; 5' nuclease activities. In Streptococcus pneumoniae (strain Hungary19A-6), this protein is ATP-dependent helicase/nuclease subunit A.